The primary structure comprises 361 residues: Alanine racemase 2 (361 aa).

The active-site Proton acceptor; specific for D-alanine is Lys-30. N6-(pyridoxal phosphate)lysine is present on Lys-30. Arg-122 contacts substrate. Tyr-256 acts as the Proton acceptor; specific for L-alanine in catalysis. Position 303 (Met-303) interacts with substrate.

Belongs to the alanine racemase family. Requires pyridoxal 5'-phosphate as cofactor.

The enzyme catalyses L-alanine = D-alanine. Its pathway is amino-acid biosynthesis; D-alanine biosynthesis; D-alanine from L-alanine: step 1/1. Catalyzes the interconversion of L-alanine and D-alanine. May also act on other amino acids. This is Alanine racemase 2 (alr2) from Staphylococcus aureus (strain Mu50 / ATCC 700699).